A 319-amino-acid polypeptide reads, in one-letter code: MGAMAPRTLLLLLAAVLAPTQTWAGSHSLRYFHTAVSRPGLGEPRFISVGYVDDTQFVRYDSDAENPRYEPRARWMEREGPEYWEEQTLVAKGQELDYRVSLRNLLSYYNQSEGGSHTIQRMYGCDVGSDGSLLRGYEQHAYDGRDYIALNEDLKTWAVADFAAWITRSKWQRNGAAERSRAYLEGTCVEWLLRYLERGKETLLRSDPPEAHVTLHPRPEGDVTLRCWALGFYPADITLTWQLNGEDLTQDMELVETRPAGDGTFQKWASVVVPLGKEQNYTCRVEHEGLPEPLSQRWEPSPSTDSNLLLLFLELWQFL.

Residues 1–24 (MGAMAPRTLLLLLAAVLAPTQTWA) form the signal peptide. The alpha-1 stretch occupies residues 25–114 (GSHSLRYFHT…LLSYYNQSEG (90 aa)). At 25–307 (GSHSLRYFHT…WEPSPSTDSN (283 aa)) the chain is on the extracellular side. N-linked (GlcNAc...) asparagine glycosylation is present at Asn110. The tract at residues 115–206 (GSHTIQRMYG…ERGKETLLRS (92 aa)) is alpha-2. Intrachain disulfides connect Cys125–Cys188 and Cys227–Cys283. The tract at residues 207–298 (DPPEAHVTLH…GLPEPLSQRW (92 aa)) is alpha-3. The 87-residue stretch at 209 to 295 (PEAHVTLHPR…EHEGLPEPLS (87 aa)) folds into the Ig-like C1-type domain. N-linked (GlcNAc...) asparagine glycosylation occurs at Asn280. A connecting peptide region spans residues 299-307 (EPSPSTDSN). The helical transmembrane segment at 308–319 (LLLLFLELWQFL) threads the bilayer.

It belongs to the MHC class I family. Heterodimer of an alpha chain and a beta chain (beta-2-microglobulin).

Its subcellular location is the membrane. Functionally, involved in the presentation of foreign antigens to the immune system. The polypeptide is Class I histocompatibility antigen, Non-RT1.A alpha-1 chain (RT1-Aw2) (Rattus norvegicus (Rat)).